Here is a 699-residue protein sequence, read N- to C-terminus: Elongation factor G 2 (699 aa).

Residues 8–290 (ERYRNIGICA…AVIEYLPSPT (283 aa)) enclose the tr-type G domain. GTP is bound by residues 17-24 (AHVDAGKT), 88-92 (DTPGH), and 142-145 (NKMD).

Belongs to the TRAFAC class translation factor GTPase superfamily. Classic translation factor GTPase family. EF-G/EF-2 subfamily.

The protein resides in the cytoplasm. Catalyzes the GTP-dependent ribosomal translocation step during translation elongation. During this step, the ribosome changes from the pre-translocational (PRE) to the post-translocational (POST) state as the newly formed A-site-bound peptidyl-tRNA and P-site-bound deacylated tRNA move to the P and E sites, respectively. Catalyzes the coordinated movement of the two tRNA molecules, the mRNA and conformational changes in the ribosome. The chain is Elongation factor G 2 from Colwellia psychrerythraea (strain 34H / ATCC BAA-681) (Vibrio psychroerythus).